We begin with the raw amino-acid sequence, 284 residues long: Polyamine aminopropyltransferase (284 aa).

In terms of domain architecture, PABS spans 4–238 (EVWNTERLHD…GPMALGWGSH (235 aa)). Gln33 serves as a coordination point for S-methyl-5'-thioadenosine. Residues His64 and Asp88 each coordinate spermidine. S-methyl-5'-thioadenosine-binding positions include Glu108 and 140-141 (DG). Asp158 acts as the Proton acceptor in catalysis. A spermidine-binding site is contributed by 158-161 (DSTD). Residue Pro165 coordinates S-methyl-5'-thioadenosine.

Belongs to the spermidine/spermine synthase family. In terms of assembly, homodimer or homotetramer.

The protein localises to the cytoplasm. The enzyme catalyses S-adenosyl 3-(methylsulfanyl)propylamine + putrescine = S-methyl-5'-thioadenosine + spermidine + H(+). It participates in amine and polyamine biosynthesis; spermidine biosynthesis; spermidine from putrescine: step 1/1. Functionally, catalyzes the irreversible transfer of a propylamine group from the amino donor S-adenosylmethioninamine (decarboxy-AdoMet) to putrescine (1,4-diaminobutane) to yield spermidine. This Ruegeria sp. (strain TM1040) (Silicibacter sp.) protein is Polyamine aminopropyltransferase.